Here is a 610-residue protein sequence, read N- to C-terminus: Propanediol dehydratase-reactivating factor large subunit (610 aa).

11-13 lines the ATP pocket; that stretch reads NSS. Residues Thr105, Asp166, and Asp183 each coordinate Mg(2+). Residues 459–462, 557–558, and Arg591 each bind ATP; these read EEIK and GS.

The protein belongs to the DdrA/PduG family. Forms a heterotetramer PduG(2)/PduH(2). The cofactor is Mg(2+).

It localises to the bacterial microcompartment. The enzyme catalyses ATP + H2O = ADP + phosphate + H(+). It functions in the pathway polyol metabolism; 1,2-propanediol degradation. Large subunit of the propanediol dehydratase-reactivating factor (DDR), which reactivates suicidally inhibited adenosylcobalamin-dependent propanediol dehydratase (diol dehydratase, DDH) found in the bacterial microcompartment (BMC) dedicated to 1,2-propanediol (1,2-PD) degradation. Reactivates inactivated DDH in the presence of ATP, Mg(2+) and free adenosylcobalamin (AdoCbl), by mediating the exchange of the tightly bound damaged cofactor AdoCbl for a free intact one. This subunit contains the adenosine nucleotide binding site. Functionally, expression of a cosmid containing the full 21-gene pdu operon in E.coli allows E.coli to grow on 1,2-propanediol (1,2-PD) with the appearance of bacterial microcompartments (BMC) in its cytoplasm. In terms of biological role, the 1,2-PD-specific bacterial microcompartment (BMC) concentrates low levels of 1,2-PD catabolic enzymes, concentrates volatile reaction intermediates thus enhancing pathway flux and keeps the level of toxic, mutagenic propionaldehyde low. The chain is Propanediol dehydratase-reactivating factor large subunit from Citrobacter freundii.